Reading from the N-terminus, the 194-residue chain is dITP/XTP pyrophosphatase (194 aa).

Residue 9–14 (THNPGK) participates in substrate binding. Positions 40 and 69 each coordinate Mg(2+). Asp-69 acts as the Proton acceptor in catalysis. Substrate-binding positions include Ser-70, 152–155 (FGYD), Lys-175, and 180–181 (HR).

Belongs to the HAM1 NTPase family. In terms of assembly, homodimer. The cofactor is Mg(2+).

The enzyme catalyses XTP + H2O = XMP + diphosphate + H(+). The catalysed reaction is dITP + H2O = dIMP + diphosphate + H(+). It catalyses the reaction ITP + H2O = IMP + diphosphate + H(+). In terms of biological role, pyrophosphatase that catalyzes the hydrolysis of nucleoside triphosphates to their monophosphate derivatives, with a high preference for the non-canonical purine nucleotides XTP (xanthosine triphosphate), dITP (deoxyinosine triphosphate) and ITP. Seems to function as a house-cleaning enzyme that removes non-canonical purine nucleotides from the nucleotide pool, thus preventing their incorporation into DNA/RNA and avoiding chromosomal lesions. The sequence is that of dITP/XTP pyrophosphatase from Caulobacter vibrioides (strain ATCC 19089 / CIP 103742 / CB 15) (Caulobacter crescentus).